A 313-amino-acid chain; its full sequence is HTH-type transcriptional regulator CysB (313 aa).

Positions 1–59 (MNLHQFRFVREAVRQNFNLTEAAKALYTSQPGVSKAIIELEDELGVEIFTRHGKRVRSL) constitute an HTH lysR-type domain. Residues 19 to 38 (LTEAAKALYTSQPGVSKAII) constitute a DNA-binding region (H-T-H motif).

Belongs to the LysR transcriptional regulatory family.

Functionally, transcriptional regulator preferentially involved in the control of sulfate transport and reduction. Binds to DNA at target promoter regions. The protein is HTH-type transcriptional regulator CysB of Burkholderia cenocepacia (strain ATCC BAA-245 / DSM 16553 / LMG 16656 / NCTC 13227 / J2315 / CF5610) (Burkholderia cepacia (strain J2315)).